The following is a 357-amino-acid chain: 5-hydroxytryptamine receptor 5A (357 aa).

At 1-36 the chain is on the extracellular side; it reads MDLPINLTSFSLSTPSTLEPNRSLDTEALRTSQSFL. N-linked (GlcNAc...) asparagine glycosylation is found at Asn-6 and Asn-21. Residues 37–63 traverse the membrane as a helical segment; the sequence is SAFRVLVLTLLGFLAAATFTWNLLVLA. Topologically, residues 64-76 are cytoplasmic; the sequence is TILRVRTFHRVPH. Residues 77 to 103 traverse the membrane as a helical segment; the sequence is NLVASMAISDVLVAVLVMPLSLVHELS. Over 104–114 the chain is Extracellular; it reads GRRWQLGRRLC. Cys-114 and Cys-192 are disulfide-bonded. The chain crosses the membrane as a helical span at residues 115-137; the sequence is QLWIACDVLCCTASIWNVTAIAL. Asp-121 contacts serotonin. The Cytoplasmic segment spans residues 138–155; it reads DRYWSITRHLEYTLRARK. The helical transmembrane segment at 156–176 threads the bilayer; it reads RVSNVMILLTWALSAVISLAP. The Extracellular segment spans residues 177 to 198; sequence LLFGWGETYSELSEECQVSREP. The chain crosses the membrane as a helical span at residues 199 to 220; that stretch reads SYTVFSTVGAFYLPLCVVLFVY. Topologically, residues 221–287 are cytoplasmic; sequence WKIYKAAKFR…QKEQRAALMV (67 aa). Residues 288–312 form a helical membrane-spanning segment; it reads GILIGVFVLCWFPFFVTELISPLCS. Residues 313–314 are Extracellular-facing; that stretch reads WD. A helical membrane pass occupies residues 315–339; it reads IPALWKSIFLWLGYSNSFFNPLIYT. Over 340–357 the chain is Cytoplasmic; that stretch reads AFNRSYSSAFKVFFSKQQ.

Belongs to the G-protein coupled receptor 1 family. As to expression, central nervous system.

The protein localises to the cell membrane. In terms of biological role, G-protein coupled receptor for 5-hydroxytryptamine (serotonin), a biogenic hormone that functions as a neurotransmitter, a hormone and a mitogen. Also functions as a receptor for ergot alkaloid derivatives and other psychoactive substances. Ligand binding causes a conformation change that triggers signaling via guanine nucleotide-binding proteins (G proteins) and modulates the activity of downstream effectors. Htr5a is coupled to G(i)/G(o) G alpha proteins and mediates inhibitory neurotransmission: signaling inhibits adenylate cyclase activity and activates a phosphatidylinositol-calcium second messenger system that regulates the release of Ca(2+) ions from intracellular stores. The sequence is that of 5-hydroxytryptamine receptor 5A from Rattus norvegicus (Rat).